A 433-amino-acid polypeptide reads, in one-letter code: ATP-dependent protease ATPase subunit HslU (433 aa).

ATP contacts are provided by residues valine 18, 60–65 (GVGKTE), aspartate 246, glutamate 311, and arginine 383.

The protein belongs to the ClpX chaperone family. HslU subfamily. A double ring-shaped homohexamer of HslV is capped on each side by a ring-shaped HslU homohexamer. The assembly of the HslU/HslV complex is dependent on binding of ATP.

The protein localises to the cytoplasm. ATPase subunit of a proteasome-like degradation complex; this subunit has chaperone activity. The binding of ATP and its subsequent hydrolysis by HslU are essential for unfolding of protein substrates subsequently hydrolyzed by HslV. HslU recognizes the N-terminal part of its protein substrates and unfolds these before they are guided to HslV for hydrolysis. The protein is ATP-dependent protease ATPase subunit HslU of Rhodopseudomonas palustris (strain ATCC BAA-98 / CGA009).